A 567-amino-acid chain; its full sequence is Structural protein ORF567 (567 aa).

The tract at residues 7-393 (INALLGFPEE…MPIEHKPEQQ (387 aa)) is disordered. Pro residues predominate over residues 65–79 (TPTPIRPAPPPPPPI). The span at 180–200 (PKREPEHHTHGSTNNEHESKR) shows a compositional bias: basic and acidic residues. The span at 219–231 (THQTSPSHSSGGT) shows a compositional bias: low complexity. Pro residues-rich tracts occupy residues 253–278 (MPIPPNPPIVREPTPTPQPTPIPTPP) and 285–299 (TPTPPRTPQPTPPPT). A compositionally biased stretch (low complexity) spans 300–312 (HGSSSTNSSGSTN). Positions 319–335 (PKPIPIPPTPPPPPPHH) are enriched in pro residues. The span at 343 to 353 (PKHESEHHDHG) shows a compositional bias: basic and acidic residues. Positions 354 to 372 (SSSTNSSSSTSNSSSGGTN) are enriched in low complexity.

The protein localises to the virion. This Acidianus two-tailed virus (ATV) protein is Structural protein ORF567.